The sequence spans 938 residues: Isoleucine--tRNA ligase (938 aa).

The short motif at 58-68 (PYANGSIHIGH) is the 'HIGH' region element. Lys-183 carries the post-translational modification N6-acetyllysine. Position 561 (Glu-561) interacts with L-isoleucyl-5'-AMP. The 'KMSKS' region motif lies at 602 to 606 (KMSKS). Lys-605 serves as a coordination point for ATP. Cys-901, Cys-904, Cys-921, and Cys-924 together coordinate Zn(2+).

It belongs to the class-I aminoacyl-tRNA synthetase family. IleS type 1 subfamily. In terms of assembly, monomer. Zn(2+) serves as cofactor.

It localises to the cytoplasm. It catalyses the reaction tRNA(Ile) + L-isoleucine + ATP = L-isoleucyl-tRNA(Ile) + AMP + diphosphate. In terms of biological role, catalyzes the attachment of isoleucine to tRNA(Ile). As IleRS can inadvertently accommodate and process structurally similar amino acids such as valine, to avoid such errors it has two additional distinct tRNA(Ile)-dependent editing activities. One activity is designated as 'pretransfer' editing and involves the hydrolysis of activated Val-AMP. The other activity is designated 'posttransfer' editing and involves deacylation of mischarged Val-tRNA(Ile). The chain is Isoleucine--tRNA ligase from Escherichia coli O127:H6 (strain E2348/69 / EPEC).